Consider the following 118-residue polypeptide: Holo-[acyl-carrier-protein] synthase (118 aa).

2 residues coordinate Mg(2+): aspartate 8 and glutamate 58.

This sequence belongs to the P-Pant transferase superfamily. AcpS family. Mg(2+) serves as cofactor.

It localises to the cytoplasm. It catalyses the reaction apo-[ACP] + CoA = holo-[ACP] + adenosine 3',5'-bisphosphate + H(+). Its function is as follows. Transfers the 4'-phosphopantetheine moiety from coenzyme A to a Ser of acyl-carrier-protein. In Streptococcus pyogenes serotype M12 (strain MGAS2096), this protein is Holo-[acyl-carrier-protein] synthase.